A 331-amino-acid polypeptide reads, in one-letter code: Phosphoribosylformylglycinamidine cyclo-ligase (331 aa).

Belongs to the AIR synthase family.

It is found in the cytoplasm. It catalyses the reaction 2-formamido-N(1)-(5-O-phospho-beta-D-ribosyl)acetamidine + ATP = 5-amino-1-(5-phospho-beta-D-ribosyl)imidazole + ADP + phosphate + H(+). It participates in purine metabolism; IMP biosynthesis via de novo pathway; 5-amino-1-(5-phospho-D-ribosyl)imidazole from N(2)-formyl-N(1)-(5-phospho-D-ribosyl)glycinamide: step 2/2. The chain is Phosphoribosylformylglycinamidine cyclo-ligase from Clostridium botulinum (strain Loch Maree / Type A3).